Here is a 635-residue protein sequence, read N- to C-terminus: Extracellular metalloproteinase 1 (635 aa).

A signal peptide spans 1 to 19; sequence MHGLLLAAGLLSLPLHVLA. The propeptide occupies 20-246; the sequence is HPQPSTSTSL…VHNVVDYVAH (227 aa). Asn-287 is a glycosylation site (N-linked (GlcNAc...) asparagine). His-430 contacts Zn(2+). Glu-431 is a catalytic residue. His-434 lines the Zn(2+) pocket. N-linked (GlcNAc...) asparagine glycans are attached at residues Asn-475, Asn-594, and Asn-623.

Belongs to the peptidase M36 family. Requires Zn(2+) as cofactor.

It is found in the secreted. Functionally, secreted metalloproteinase probably acting as a virulence factor. This Trichophyton tonsurans (Scalp ringworm fungus) protein is Extracellular metalloproteinase 1 (MEP1).